Reading from the N-terminus, the 311-residue chain is Protein MGF 360-16R (311 aa).

The protein belongs to the asfivirus MGF 360 family.

Plays a role in virus cell tropism, and may be required for efficient virus replication in macrophages. The protein is Protein MGF 360-16R of African swine fever virus (strain Badajoz 1971 Vero-adapted) (Ba71V).